Consider the following 692-residue polypeptide: Chaperone protein dnaK1 (692 aa).

The residue at position 197 (T197) is a Phosphothreonine; by autocatalysis.

Belongs to the heat shock protein 70 family.

Functionally, acts as a chaperone. This Synechocystis sp. (strain ATCC 27184 / PCC 6803 / Kazusa) protein is Chaperone protein dnaK1 (dnaK1).